We begin with the raw amino-acid sequence, 319 residues long: Acetyl-coenzyme A carboxylase carboxyl transferase subunit alpha (319 aa).

The CoA carboxyltransferase C-terminal domain occupies 35-296; sequence NLDEEVQRLR…KAQLLDDLSE (262 aa).

This sequence belongs to the AccA family. Acetyl-CoA carboxylase is a heterohexamer composed of biotin carboxyl carrier protein (AccB), biotin carboxylase (AccC) and two subunits each of ACCase subunit alpha (AccA) and ACCase subunit beta (AccD).

The protein localises to the cytoplasm. The catalysed reaction is N(6)-carboxybiotinyl-L-lysyl-[protein] + acetyl-CoA = N(6)-biotinyl-L-lysyl-[protein] + malonyl-CoA. Its pathway is lipid metabolism; malonyl-CoA biosynthesis; malonyl-CoA from acetyl-CoA: step 1/1. Functionally, component of the acetyl coenzyme A carboxylase (ACC) complex. First, biotin carboxylase catalyzes the carboxylation of biotin on its carrier protein (BCCP) and then the CO(2) group is transferred by the carboxyltransferase to acetyl-CoA to form malonyl-CoA. The chain is Acetyl-coenzyme A carboxylase carboxyl transferase subunit alpha from Sodalis glossinidius (strain morsitans).